A 109-amino-acid polypeptide reads, in one-letter code: Cell division protein ZapA (109 aa).

The stretch at 21-99 (PEQRDALNQA…IEQALLEQGR (79 aa)) forms a coiled coil.

Belongs to the ZapA family. Type 1 subfamily. As to quaternary structure, homodimer. Interacts with FtsZ.

The protein localises to the cytoplasm. In terms of biological role, activator of cell division through the inhibition of FtsZ GTPase activity, therefore promoting FtsZ assembly into bundles of protofilaments necessary for the formation of the division Z ring. It is recruited early at mid-cell but it is not essential for cell division. This chain is Cell division protein ZapA, found in Klebsiella pneumoniae (strain 342).